The sequence spans 78 residues: MSNIEQQVKKIVAEQLGVNEADVKNESSFQDDLGADSLDTVELVMALEEAFGCEIPDEDAEKITTVQLAIDYINAHNG.

The Carrier domain maps to 2–77; it reads SNIEQQVKKI…LAIDYINAHN (76 aa). Residue Ser37 is modified to O-(pantetheine 4'-phosphoryl)serine.

It belongs to the acyl carrier protein (ACP) family. In terms of processing, 4'-phosphopantetheine is transferred from CoA to a specific serine of apo-ACP by AcpS. This modification is essential for activity because fatty acids are bound in thioester linkage to the sulfhydryl of the prosthetic group.

The protein resides in the cytoplasm. It functions in the pathway lipid metabolism; fatty acid biosynthesis. In terms of biological role, carrier of the growing fatty acid chain in fatty acid biosynthesis. This chain is Acyl carrier protein, found in Neisseria meningitidis serogroup C / serotype 2a (strain ATCC 700532 / DSM 15464 / FAM18).